The sequence spans 616 residues: Chaperone protein HscA (616 aa).

It belongs to the heat shock protein 70 family.

Functionally, chaperone involved in the maturation of iron-sulfur cluster-containing proteins. Has a low intrinsic ATPase activity which is markedly stimulated by HscB. Involved in the maturation of IscU. The sequence is that of Chaperone protein HscA from Serratia proteamaculans (strain 568).